A 120-amino-acid chain; its full sequence is Mating factor alpha-2 (120 aa).

Residues 1-21 (MKFISTFLTFILAAVSVTASS) form the signal peptide. 2 propeptides span residues 22 to 86 (DEDI…VADA) and 102 to 107 (EANADA).

Its function is as follows. The active factor is excreted into the culture medium by haploid cells of the alpha mating type and acts on cells of the opposite mating type (type A). It mediates the conjugation process between the two types by inhibiting the initiation of DNA synthesis in type a cells and synchronizing them with type alpha. This Saccharomyces cerevisiae (strain ATCC 204508 / S288c) (Baker's yeast) protein is Mating factor alpha-2 (MF(ALPHA)2).